The chain runs to 263 residues: Small ribosomal subunit protein eS4 (263 aa).

Positions 42–104 (LPLIIFLRNR…TGEHFRLVYD (63 aa)) constitute an S4 RNA-binding domain.

It belongs to the eukaryotic ribosomal protein eS4 family. In terms of assembly, component of the small ribosomal subunit.

The protein resides in the cytoplasm. Functionally, component of the small ribosomal subunit. The ribosome is a large ribonucleoprotein complex responsible for the synthesis of proteins in the cell. This is Small ribosomal subunit protein eS4 (rps4) from Xenopus tropicalis (Western clawed frog).